The following is a 346-amino-acid chain: Anthranilate phosphoribosyltransferase (346 aa).

5-phospho-alpha-D-ribose 1-diphosphate contacts are provided by residues G80, 83 to 84 (GD), T88, 90 to 93 (NIST), 108 to 116 (KHGNTAVSS), and S120. G80 is a binding site for anthranilate. S92 is a Mg(2+) binding site. N111 contacts anthranilate. Anthranilate is bound at residue R166. Residues D225 and E226 each contribute to the Mg(2+) site.

This sequence belongs to the anthranilate phosphoribosyltransferase family. Homodimer. It depends on Mg(2+) as a cofactor.

The catalysed reaction is N-(5-phospho-beta-D-ribosyl)anthranilate + diphosphate = 5-phospho-alpha-D-ribose 1-diphosphate + anthranilate. The protein operates within amino-acid biosynthesis; L-tryptophan biosynthesis; L-tryptophan from chorismate: step 2/5. Functionally, catalyzes the transfer of the phosphoribosyl group of 5-phosphorylribose-1-pyrophosphate (PRPP) to anthranilate to yield N-(5'-phosphoribosyl)-anthranilate (PRA). The chain is Anthranilate phosphoribosyltransferase from Desulforudis audaxviator (strain MP104C).